The chain runs to 1174 residues: MFELNNFDALQIGLASTEKIREWSRGEVKKPETINYRTLKPERDGLFCERIFGPQKDWECHCGKYKRIRYKGIVCDRCGVEVTKAKVRRERMGHIELAAPVSHIWYFKGIPSRMGLILDMSPRALEKVLYFASYVVLDPKETQLLKKQLLTEKEYREAVDKYGEQNFVASMGAESVKKLLEEIDLEQLSLVLKEDLKNSTGQKKIRIIRRLEVVESFRKSGNRPEWMVIDVIPVIPPDLRPMVQLDGGRFATSDLNDLYRRVINRNNRLKKLLDLGAPDIIVRNEKRMLQEAVDALIDNGRRGRPVTGPGNRPLKSLSDMLKGKQGRFRQNLLGKRVDYSGRSVIVVGPELKMYQCGLPKEMALELFKPFVMKKLVERGLAHNIKSAKRMVERVQAQVWDVLEEVISDHPVLLNRAPTLHRLGIQAFQPVLVEGRAIKLHPLSCTAYNADFDGDQMAVHVPLSVEAQSEARFLMLAAHNILKPSDGKPVVVPTQDMVLGSYYLTVEREGAKGEGRYFSFPDEVIMAYQLKQIDINAKIKVKMTKIIDGKYISGIIDATAGKIIFNECVPQDLGFIDRSKPGNEFKLEIDFLVAKKNLGKIINKCYMKHGATKTSIMLDKIKARGYHYSTISGITVSTSDMEVPEAKKRLLSESDAAVDKIEKMYRRGFISEDERYQRVIERWTKTTEDVADELMNNLDKFNPIFMMADSGARGSKSQIKQLAGMRGLMANPSGKIIELPIRASFREGLDVLEYFISTHGARKGNADTALKTADSGYLTRRLVDVSQDVIVREEDCGTYEGYDVSEIKEGNEVIESLSERLTGRYSAEDIIDPNNHQIIVPKNSYMDSKLADRIEASGIKKVKIRSVFTCKSRHGVCSKCYGMNMATAQKIDIGESVGIIAAQSIGEPGTQLTMRTFHTGGVAGSDITQGLPRVEELFEARKPKGLAIVSEVSGTVKMEETKKKRSVSVITDNGEEVTYDIPFGSRIKVSNGDLISAGDEVTEGSVNPHDILRIKGVQGVKNYLLSEVQKVYRLQGVDINDKHLEVVIRQMTRKIKIEESGDTELLPGTMIDIFDFEEENARVEASGGSAAQGRVALLGITKAALATESFLSAASFQETTRVLTDAAIKGKIDPLLGLKENVIIGKLIPAGTGMTRYRSIKINTENEVQENQLEA.

Residues cysteine 60, cysteine 62, cysteine 75, and cysteine 78 each coordinate Zn(2+). The Mg(2+) site is built by aspartate 450, aspartate 452, and aspartate 454. Zn(2+) is bound by residues cysteine 795, cysteine 869, cysteine 876, and cysteine 879.

The protein belongs to the RNA polymerase beta' chain family. In terms of assembly, the RNAP catalytic core consists of 2 alpha, 1 beta, 1 beta' and 1 omega subunit. When a sigma factor is associated with the core the holoenzyme is formed, which can initiate transcription. The cofactor is Mg(2+). Requires Zn(2+) as cofactor.

The catalysed reaction is RNA(n) + a ribonucleoside 5'-triphosphate = RNA(n+1) + diphosphate. Functionally, DNA-dependent RNA polymerase catalyzes the transcription of DNA into RNA using the four ribonucleoside triphosphates as substrates. The protein is DNA-directed RNA polymerase subunit beta' of Clostridium kluyveri (strain ATCC 8527 / DSM 555 / NBRC 12016 / NCIMB 10680 / K1).